Here is an 85-residue protein sequence, read N- to C-terminus: Antifungal protein (85 aa).

An N-terminal signal peptide occupies residues 1 to 18 (MVKLFVIVILALIAVAFG). 2 repeat units span residues 19-25 (QHGHGGQ) and 67-73 (QHGHGGQ). A 2 X 7 AA repeats of Q-H-G-H-G-G-Q region spans residues 19–73 (QHGHGGQDQHGYGHGQQAVYGKGHEGHGVNNLGQDGHGQHGYAHGHSDQHGHGGQ). Residues 22 to 32 (HGGQDQHGYGH) are compositionally biased toward gly residues. Residues 22–85 (HGGQDQHGYG…QHDGYKNRGY (64 aa)) are disordered. The span at 63 to 85 (GHSDQHGHGGQHGQHDGYKNRGY) shows a compositional bias: basic and acidic residues.

As to quaternary structure, homodimer. In terms of processing, the N-terminus is blocked. In terms of tissue distribution, hemolymph.

In terms of biological role, this protein inhibits the growth of a variety of fungal species. The antifungal activity of this protein is enhanced by the presence of sarcotoxin IA. The polypeptide is Antifungal protein (Sarcophaga peregrina (Flesh fly)).